The primary structure comprises 130 residues: Small ribosomal subunit protein uS8 (130 aa).

The protein belongs to the universal ribosomal protein uS8 family. As to quaternary structure, part of the 30S ribosomal subunit. Contacts proteins S5 and S12.

One of the primary rRNA binding proteins, it binds directly to 16S rRNA central domain where it helps coordinate assembly of the platform of the 30S subunit. This chain is Small ribosomal subunit protein uS8, found in Cellvibrio japonicus (strain Ueda107) (Pseudomonas fluorescens subsp. cellulosa).